We begin with the raw amino-acid sequence, 38 residues long: Cytochrome b6-f complex subunit 5 (38 aa).

A helical transmembrane segment spans residues 5-25 (LLCGIVLGLIPVTLLGLFVDA).

It belongs to the PetG family. As to quaternary structure, the 4 large subunits of the cytochrome b6-f complex are cytochrome b6, subunit IV (17 kDa polypeptide, PetD), cytochrome f and the Rieske protein, while the 4 small subunits are PetG, PetL, PetM and PetN. The complex functions as a dimer.

Its subcellular location is the cellular thylakoid membrane. In terms of biological role, component of the cytochrome b6-f complex, which mediates electron transfer between photosystem II (PSII) and photosystem I (PSI), cyclic electron flow around PSI, and state transitions. PetG is required for either the stability or assembly of the cytochrome b6-f complex. In Prochlorococcus marinus (strain MIT 9313), this protein is Cytochrome b6-f complex subunit 5.